Consider the following 607-residue polypeptide: Pogo transposable element with KRAB domain (607 aa).

Positions 8–29 form a coiled coil; that stretch reads LNLTLKEEQKEEEVEIQELEDG. Lys-13 participates in a covalent cross-link: Glycyl lysine isopeptide (Lys-Gly) (interchain with G-Cter in SUMO2). A KRAB domain is found at 47–118; the sequence is ALFDEVAIYF…DEWRLQGVTF (72 aa). In terms of domain architecture, HTH CENPB-type spans 250 to 323; sequence AFRGPKNGRF…MRRYDLSLRH (74 aa). Positions 355 to 567 constitute a DDE-1 domain; that stretch reads YEVAQMGNAD…ISSESIVQGF (213 aa). Lys-384 participates in a covalent cross-link: Glycyl lysine isopeptide (Lys-Gly) (interchain with G-Cter in SUMO2). The tract at residues 588–607 is disordered; it reads GELPKEPPKECGPESVAEGD. Basic and acidic residues predominate over residues 589 to 599; the sequence is ELPKEPPKECG.

It localises to the nucleus. The chain is Pogo transposable element with KRAB domain (Pogk) from Mus musculus (Mouse).